Here is a 67-residue protein sequence, read N- to C-terminus: ATP synthase F(0) complex subunit 8 (67 aa).

The helical transmembrane segment at 8-24 (TWFITIISSMATLFILF) threads the bilayer. At lysine 54 the chain carries N6-acetyllysine; alternate. Residue lysine 54 is modified to N6-succinyllysine; alternate. At lysine 57 the chain carries N6-acetyllysine.

This sequence belongs to the ATPase protein 8 family. As to quaternary structure, component of the ATP synthase complex composed at least of ATP5F1A/subunit alpha, ATP5F1B/subunit beta, ATP5MC1/subunit c (homooctomer), MT-ATP6/subunit a, MT-ATP8/subunit 8, ATP5ME/subunit e, ATP5MF/subunit f, ATP5MG/subunit g, ATP5MK/subunit k, ATP5MJ/subunit j, ATP5F1C/subunit gamma, ATP5F1D/subunit delta, ATP5F1E/subunit epsilon, ATP5PF/subunit F6, ATP5PB/subunit b, ATP5PD/subunit d, ATP5PO/subunit OSCP. ATP synthase complex consists of a soluble F(1) head domain (subunits alpha(3) and beta(3)) - the catalytic core - and a membrane F(0) domain - the membrane proton channel (subunits c, a, 8, e, f, g, k and j). These two domains are linked by a central stalk (subunits gamma, delta, and epsilon) rotating inside the F1 region and a stationary peripheral stalk (subunits F6, b, d, and OSCP). Interacts with PRICKLE3.

The protein resides in the mitochondrion membrane. Subunit 8, of the mitochondrial membrane ATP synthase complex (F(1)F(0) ATP synthase or Complex V) that produces ATP from ADP in the presence of a proton gradient across the membrane which is generated by electron transport complexes of the respiratory chain. ATP synthase complex consist of a soluble F(1) head domain - the catalytic core - and a membrane F(1) domain - the membrane proton channel. These two domains are linked by a central stalk rotating inside the F(1) region and a stationary peripheral stalk. During catalysis, ATP synthesis in the catalytic domain of F(1) is coupled via a rotary mechanism of the central stalk subunits to proton translocation. In vivo, can only synthesize ATP although its ATP hydrolase activity can be activated artificially in vitro. Part of the complex F(0) domain. This chain is ATP synthase F(0) complex subunit 8, found in Rattus norvegicus (Rat).